A 795-amino-acid chain; its full sequence is Lon protease (795 aa).

The Lon N-terminal domain occupies tyrosine 17–isoleucine 214. Position 370-377 (glycine 370–threonine 377) interacts with ATP. Residues lysine 605–arginine 787 form the Lon proteolytic domain. Active-site residues include serine 692 and lysine 735.

The protein belongs to the peptidase S16 family. Homohexamer. Organized in a ring with a central cavity.

It localises to the cytoplasm. It catalyses the reaction Hydrolysis of proteins in presence of ATP.. In terms of biological role, ATP-dependent serine protease that mediates the selective degradation of mutant and abnormal proteins as well as certain short-lived regulatory proteins. Required for cellular homeostasis and for survival from DNA damage and developmental changes induced by stress. Degrades polypeptides processively to yield small peptide fragments that are 5 to 10 amino acids long. Binds to DNA in a double-stranded, site-specific manner. The sequence is that of Lon protease from Aquifex aeolicus (strain VF5).